The following is a 150-amino-acid chain: Lipoprotein signal peptidase (150 aa).

Helical transmembrane passes span 59-79 and 84-101; these read VFVG…RYLP and LLRL…GNLI. Residues Asp111 and Asp125 contribute to the active site. The chain crosses the membrane as a helical span at residues 117–137; the sequence is IWPVFNLADMAIVFGVIILCW.

It belongs to the peptidase A8 family.

It localises to the cell membrane. The enzyme catalyses Release of signal peptides from bacterial membrane prolipoproteins. Hydrolyzes -Xaa-Yaa-Zaa-|-(S,diacylglyceryl)Cys-, in which Xaa is hydrophobic (preferably Leu), and Yaa (Ala or Ser) and Zaa (Gly or Ala) have small, neutral side chains.. The protein operates within protein modification; lipoprotein biosynthesis (signal peptide cleavage). This protein specifically catalyzes the removal of signal peptides from prolipoproteins. The protein is Lipoprotein signal peptidase of Moorella thermoacetica (strain ATCC 39073 / JCM 9320).